The chain runs to 124 residues: Cytochrome c oxidase subunit 4 isoform 1, mitochondrial (124 aa).

K4 is subject to N6-acetyllysine; alternate. Residue K4 is modified to N6-succinyllysine; alternate. Phosphoserine occurs at positions 31 and 33. Residue K35 is modified to N6-acetyllysine; alternate. An N6-succinyllysine; alternate modification is found at K35. K42 carries the N6-acetyllysine modification.

It belongs to the cytochrome c oxidase IV family. As to quaternary structure, component of the cytochrome c oxidase (complex IV, CIV), a multisubunit enzyme composed of 14 subunits. The complex is composed of a catalytic core of 3 subunits MT-CO1, MT-CO2 and MT-CO3, encoded in the mitochondrial DNA, and 11 supernumerary subunits COX4I, COX5A, COX5B, COX6A, COX6B, COX6C, COX7A, COX7B, COX7C, COX8 and NDUFA4, which are encoded in the nuclear genome. The complex exists as a monomer or a dimer and forms supercomplexes (SCs) in the inner mitochondrial membrane with NADH-ubiquinone oxidoreductase (complex I, CI) and ubiquinol-cytochrome c oxidoreductase (cytochrome b-c1 complex, complex III, CIII), resulting in different assemblies (supercomplex SCI(1)III(2)IV(1) and megacomplex MCI(2)III(2)IV(2)). Interacts with PHB2; the interaction decreases in absence of SPHK2. Interacts with AFG1L. Interacts with ABCB7; this interaction allows the regulation of cellular iron homeostasis and cellular reactive oxygen species (ROS) levels in cardiomyocytes. Interacts with FLVCR2; this interaction occurs in the absence of heme and is disrupted upon heme binding. Interacts with IRGC.

It localises to the mitochondrion inner membrane. It participates in energy metabolism; oxidative phosphorylation. Component of the cytochrome c oxidase, the last enzyme in the mitochondrial electron transport chain which drives oxidative phosphorylation. The respiratory chain contains 3 multisubunit complexes succinate dehydrogenase (complex II, CII), ubiquinol-cytochrome c oxidoreductase (cytochrome b-c1 complex, complex III, CIII) and cytochrome c oxidase (complex IV, CIV), that cooperate to transfer electrons derived from NADH and succinate to molecular oxygen, creating an electrochemical gradient over the inner membrane that drives transmembrane transport and the ATP synthase. Cytochrome c oxidase is the component of the respiratory chain that catalyzes the reduction of oxygen to water. Electrons originating from reduced cytochrome c in the intermembrane space (IMS) are transferred via the dinuclear copper A center (CU(A)) of subunit 2 and heme A of subunit 1 to the active site in subunit 1, a binuclear center (BNC) formed by heme A3 and copper B (CU(B)). The BNC reduces molecular oxygen to 2 water molecules using 4 electrons from cytochrome c in the IMS and 4 protons from the mitochondrial matrix. The protein is Cytochrome c oxidase subunit 4 isoform 1, mitochondrial (COX4I1) of Saimiri sciureus (Common squirrel monkey).